We begin with the raw amino-acid sequence, 474 residues long: tRNA-2-methylthio-N(6)-dimethylallyladenosine synthase (474 aa).

In terms of domain architecture, MTTase N-terminal spans 3–120 (KKLHIKTWGC…LPEMINSVRG (118 aa)). Cysteine 12, cysteine 49, cysteine 83, cysteine 157, cysteine 161, and cysteine 164 together coordinate [4Fe-4S] cluster. The Radical SAM core domain maps to 143 to 375 (RAEGPTAFVS…QERINQQAMA (233 aa)). The region spanning 378–441 (RRMLGTVQRI…TNSLRGKVVR (64 aa)) is the TRAM domain.

Belongs to the methylthiotransferase family. MiaB subfamily. In terms of assembly, monomer. The cofactor is [4Fe-4S] cluster.

It localises to the cytoplasm. The enzyme catalyses N(6)-dimethylallyladenosine(37) in tRNA + (sulfur carrier)-SH + AH2 + 2 S-adenosyl-L-methionine = 2-methylsulfanyl-N(6)-dimethylallyladenosine(37) in tRNA + (sulfur carrier)-H + 5'-deoxyadenosine + L-methionine + A + S-adenosyl-L-homocysteine + 2 H(+). Its function is as follows. Catalyzes the methylthiolation of N6-(dimethylallyl)adenosine (i(6)A), leading to the formation of 2-methylthio-N6-(dimethylallyl)adenosine (ms(2)i(6)A) at position 37 in tRNAs that read codons beginning with uridine. This Citrobacter koseri (strain ATCC BAA-895 / CDC 4225-83 / SGSC4696) protein is tRNA-2-methylthio-N(6)-dimethylallyladenosine synthase.